Here is a 500-residue protein sequence, read N- to C-terminus: Cytochrome P450 71B9 (500 aa).

The helical transmembrane segment at 1-21 threads the bilayer; it reads MATIWFLSLLFLCCILLAAFK. Residue Cys-440 coordinates heme.

It belongs to the cytochrome P450 family. Heme is required as a cofactor.

The protein resides in the membrane. In Arabidopsis thaliana (Mouse-ear cress), this protein is Cytochrome P450 71B9 (CYP71B9).